The following is an 868-amino-acid chain: Cytosolic phospholipase A2 epsilon (868 aa).

The tract at residues 1–46 (MSLQASEGCPGLGTNVFVPQSPQTDEEGSRSGRSFSEFEDTQDLDT) is disordered. Positions 46–170 (TPGLPPFCPM…CFRKKTHVKF (125 aa)) constitute a C2 domain. Residues Asp84, Asp90, Asp140, Asp142, and Asp148 each contribute to the Ca(2+) site. Residues 324 to 856 (PCPETLDVRL…TLLQALRLAV (533 aa)) enclose the PLA2c domain. Residue Ser412 is the Nucleophile of the active site. Asp700 functions as the Proton acceptor in the catalytic mechanism. Ser800 is subject to Phosphoserine. A required for localization at membrane structures region spans residues 857-868 (EKKKRLKGQCPS).

Requires Ca(2+) as cofactor.

It is found in the cytoplasm. The protein localises to the cytosol. It localises to the early endosome membrane. Its subcellular location is the lysosome membrane. The protein resides in the cell membrane. It carries out the reaction a 1,2-diacyl-sn-glycero-3-phosphoethanolamine + a 1,2-diacyl-sn-glycero-3-phosphocholine = an N-acyl-1,2-diacyl-sn-glycero-3-phosphoethanolamine + a 2-acyl-sn-glycero-3-phosphocholine + H(+). It catalyses the reaction 1-hexadecanoyl-2-octadecanoyl-sn-glycero-3-phosphocholine + 1,2-di-(9Z-octadecenoyl)-sn-glycero-3-phosphoethanolamine = 2-octadecanoyl-sn-glycero-3-phosphocholine + N-hexadecanoyl-1,2-di-(9Z-octadecenoyl)-sn-glycero-3-phosphoethanolamine + H(+). The enzyme catalyses 1-octadecanoyl-2-hexadecanoyl-sn-glycero-3-phosphocholine + 1,2-di-(9Z-octadecenoyl)-sn-glycero-3-phosphoethanolamine = N-octadecanoyl-1,2-di-(9Z-octadecenoyl)-sn-glycero-3-phosphoethanolamine + 2-hexadecanoyl-sn-glycero-3-phosphocholine + H(+). The catalysed reaction is 1,2-di-(9Z-octadecenoyl)-sn-glycero-3-phosphoethanolamine + 1,2-dihexadecanoyl-sn-glycero-3-phosphocholine = N-hexadecanoyl-1,2-di-(9Z-octadecenoyl)-sn-glycero-3-phosphoethanolamine + 2-hexadecanoyl-sn-glycero-3-phosphocholine + H(+). It carries out the reaction 1,2-di-(5Z,8Z,11Z,14Z-eicosatetraenoyl)-sn-glycero-3-phosphocholine + 1,2-di-(9Z-octadecenoyl)-sn-glycero-3-phosphoethanolamine = N-(5Z,8Z,11Z,14Z-eicosatetraenoyl)-1,2-di-(9Z-octadecenoyl)-sn-glycero-3-phosphoethanolamine + 2-(5Z,8Z,11Z,14Z)-eicosatetraenoyl-sn-glycero-3-phosphocholine + H(+). It catalyses the reaction 2 1,2-di-(9Z-octadecenoyl)-sn-glycero-3-phosphoethanolamine = N,1,2-tri-(9Z-octadecenoyl)-sn-glycero-3-phosphoethanolamine + 2-(9Z-octadecenoyl)-sn-glycero-3-phosphoethanolamine + H(+). The enzyme catalyses 1-(1Z-octadecenyl)-2-(9Z-octadecenoyl)-sn-glycero-3-phosphoethanolamine + 1,2-dihexadecanoyl-sn-glycero-3-phosphocholine = 1-O-(1Z-octadecenoyl)-2-(9Z-octadecenoyl)-sn-glycero-3-phospho-N-hexadecanoyl-ethanolamine + 2-hexadecanoyl-sn-glycero-3-phosphocholine + H(+). The catalysed reaction is a 1,2-diacyl-sn-glycero-3-phosphocholine + H2O = a 1-acyl-sn-glycero-3-phosphocholine + a fatty acid + H(+). It carries out the reaction 1-hexadecanoyl-2-(5Z,8Z,11Z,14Z-eicosatetraenoyl)-sn-glycero-3-phosphocholine + H2O = 1-hexadecanoyl-sn-glycero-3-phosphocholine + (5Z,8Z,11Z,14Z)-eicosatetraenoate + H(+). It catalyses the reaction 1-hexadecanoyl-sn-glycero-3-phosphocholine + H2O = sn-glycerol 3-phosphocholine + hexadecanoate + H(+). Its activity is regulated as follows. Stimulated by cytosolic Ca(2+). Stimulated by anionic phospholipids such as phosphatidylserines, phosphatidates and phosphatidylinositols. Functionally, calcium-dependent N-acyltransferase involved in the biosynthesis of N-acyl ethanolamines (NAEs) in the brain. Transfers the sn-1 fatty acyl chain of phosphatidylcholine (fatty acyl donor) to the amine group of phosphatidylethanolamine (fatty acyl acceptor) to generate N-acyl phosphatidylethanolamine (NAPE). Similarly can use plasmenylethanolamine as a fatty acyl acceptor to form N-acyl plasmenylethanolamine (N-Acyl-PlsEt). Both NAPE and N-Acyl-PlsEt can serve as precursors of bioactive NAEs like N-arachidonoyl phosphatidylethanolamine also called anandamide. Has weak phospholipase A2 and lysophospholipase activities. Regulates intracellular membrane trafficking that requires modulation of membrane curvature as it occurs by enrichment in lysophospholipids. Promotes tubule formation involved in clathrin-independent endocytotic trafficking and cargo recycling. The protein is Cytosolic phospholipase A2 epsilon of Homo sapiens (Human).